The chain runs to 145 residues: 3-dehydroquinate dehydratase (145 aa).

The Proton acceptor role is filled by Tyr-24. Asn-76, His-82, and Asp-89 together coordinate substrate. The active-site Proton donor is the His-102. Residues Leu-103–Ser-104 and Arg-113 contribute to the substrate site.

The protein belongs to the type-II 3-dehydroquinase family. In terms of assembly, homododecamer.

It catalyses the reaction 3-dehydroquinate = 3-dehydroshikimate + H2O. The protein operates within metabolic intermediate biosynthesis; chorismate biosynthesis; chorismate from D-erythrose 4-phosphate and phosphoenolpyruvate: step 3/7. Catalyzes a trans-dehydration via an enolate intermediate. The chain is 3-dehydroquinate dehydratase from Nitrosomonas eutropha (strain DSM 101675 / C91 / Nm57).